Consider the following 76-residue polypeptide: Vasotab-TY1 (76 aa).

The first 21 residues, 1–21, serve as a signal peptide directing secretion; the sequence is MKFTLFSVLVVLLIATFVAAD. The region spanning 22-76 is the Kazal-like domain; sequence DCPRICTADFRPVCGTPSGGRRSANRTFGNQCSLDSHNCLNKGDTYDKLHDGECK. 3 disulfides stabilise this stretch: C23-C60, C27-C53, and C35-C75.

Expressed by the salivary gland.

It is found in the secreted. Vasodilator protein that inhibits vasoconstriction of isolated rat femoral artery induced by phenylephrine. Since platelet aggregation and vasoconstriction are key hemostatic responses, particularly in small wounds, this protein likely participates in the antihemostatic responses during blood feeding. Blocks L-type calcium channels (Cav1/CACNA1) in left ventricular myocytes isolated from rat hearts. The protein is Vasotab-TY1 of Tabanus yao (Horsefly).